A 137-amino-acid polypeptide reads, in one-letter code: Histone H2B (137 aa).

Residues 1–10 (MPPKPADKKP) are compositionally biased toward basic and acidic residues. The disordered stretch occupies residues 1-45 (MPPKPADKKPASKAPATASKAPEKKDAGKKTAASGDKKKRTKARK). N6-acetyllysine; alternate occurs at positions 8 and 9. Residues Lys8 and Lys9 each participate in a glycyl lysine isopeptide (Lys-Gly) (interchain with G-Cter in SUMO); alternate cross-link. Ser12 carries the post-translational modification Phosphoserine. Lys13 carries the post-translational modification N6-acetyllysine. Residue Lys24 is modified to N6-acetyllysine; alternate. Residue Lys24 forms a Glycyl lysine isopeptide (Lys-Gly) (interchain with G-Cter in SUMO); alternate linkage. Lys25 participates in a covalent cross-link: Glycyl lysine isopeptide (Lys-Gly) (interchain with G-Cter in SUMO). Lys131 participates in a covalent cross-link: Glycyl lysine isopeptide (Lys-Gly) (interchain with G-Cter in ubiquitin).

It belongs to the histone H2B family. In terms of assembly, the nucleosome is a histone octamer containing two molecules each of H2A, H2B, H3 and H4 assembled in one H3-H4 heterotetramer and two H2A-H2B heterodimers. The octamer wraps approximately 147 bp of DNA. In terms of processing, monoubiquitinated by the ubc-2-bre-1 complex to form H2BK123ub1. H2BK123ub1 gives a specific tag for epigenetic transcriptional activation and is also prerequisite for H3K4me and H3K79me formation. H2BK123ub1 also modulates the formation of double-strand breaks during meiosis and is a prerequisite for DNA-damage checkpoint activation. Post-translationally, phosphorylated by ste-20 to form H2BS10ph during progression through meiotic prophase. May be correlated with chromosome condensation. Acetylated by gcn-5 to form H2BK11ac and H2BK16ac. H2BK16ac can also be formed by esa-1. Acetylation of N-terminal lysines and particularly formation of H2BK11acK16ac has a positive effect on transcription. In terms of processing, sumoylation to form H2BK6su or H2BK7su, and probably also H2BK16su or H2BK17su, occurs preferentially near the telomeres and represses gene transcription.

It is found in the nucleus. The protein localises to the chromosome. In terms of biological role, core component of nucleosome. Nucleosomes wrap and compact DNA into chromatin, limiting DNA accessibility to the cellular machineries which require DNA as a template. Histones thereby play a central role in transcription regulation, DNA repair, DNA replication and chromosomal stability. DNA accessibility is regulated via a complex set of post-translational modifications of histones, also called histone code, and nucleosome remodeling. This is Histone H2B (hh2b) from Neurospora crassa (strain ATCC 24698 / 74-OR23-1A / CBS 708.71 / DSM 1257 / FGSC 987).